Consider the following 466-residue polypeptide: Asparagine--tRNA ligase (466 aa).

It belongs to the class-II aminoacyl-tRNA synthetase family. In terms of assembly, homodimer.

It localises to the cytoplasm. The enzyme catalyses tRNA(Asn) + L-asparagine + ATP = L-asparaginyl-tRNA(Asn) + AMP + diphosphate + H(+). The chain is Asparagine--tRNA ligase from Buchnera aphidicola subsp. Schizaphis graminum (strain Sg).